Reading from the N-terminus, the 202-residue chain is 3-isopropylmalate dehydratase small subunit (202 aa).

Belongs to the LeuD family. LeuD type 1 subfamily. In terms of assembly, heterodimer of LeuC and LeuD.

It carries out the reaction (2R,3S)-3-isopropylmalate = (2S)-2-isopropylmalate. It participates in amino-acid biosynthesis; L-leucine biosynthesis; L-leucine from 3-methyl-2-oxobutanoate: step 2/4. Its function is as follows. Catalyzes the isomerization between 2-isopropylmalate and 3-isopropylmalate, via the formation of 2-isopropylmaleate. This Novosphingobium aromaticivorans (strain ATCC 700278 / DSM 12444 / CCUG 56034 / CIP 105152 / NBRC 16084 / F199) protein is 3-isopropylmalate dehydratase small subunit.